A 406-amino-acid chain; its full sequence is Acetate kinase (406 aa).

Residue Asn-8 coordinates Mg(2+). Lys-15 serves as a coordination point for ATP. Arg-92 contributes to the substrate binding site. Residue Asp-149 is the Proton donor/acceptor of the active site. Residues 209–213 (HLGNG), 283–285 (DFR), and 331–335 (GVGEN) contribute to the ATP site. A Mg(2+)-binding site is contributed by Glu-385.

Belongs to the acetokinase family. In terms of assembly, homodimer. Mg(2+) is required as a cofactor. Mn(2+) serves as cofactor.

Its subcellular location is the cytoplasm. The enzyme catalyses acetate + ATP = acetyl phosphate + ADP. The protein operates within metabolic intermediate biosynthesis; acetyl-CoA biosynthesis; acetyl-CoA from acetate: step 1/2. In terms of biological role, catalyzes the formation of acetyl phosphate from acetate and ATP. Can also catalyze the reverse reaction. This chain is Acetate kinase, found in Corynebacterium aurimucosum (strain ATCC 700975 / DSM 44827 / CIP 107346 / CN-1) (Corynebacterium nigricans).